Reading from the N-terminus, the 75-residue chain is uncharacterized protein (75 aa).

A helical membrane pass occupies residues 4–26 (PSLLFLGFSGVLAFGEVGWVGVY).

Its subcellular location is the membrane. This is an uncharacterized protein from Treponema pallidum (strain Nichols).